A 58-amino-acid polypeptide reads, in one-letter code: Large ribosomal subunit protein bL32 (58 aa).

Belongs to the bacterial ribosomal protein bL32 family.

The protein is Large ribosomal subunit protein bL32 of Staphylococcus aureus (strain NCTC 8325 / PS 47).